The sequence spans 103 residues: uncharacterized protein (103 aa).

The next 2 membrane-spanning stretches (helical) occupy residues 13 to 33 (LLPF…YCIL) and 77 to 97 (FSIY…PYLF).

It is found in the endoplasmic reticulum membrane. This is an uncharacterized protein from Schizosaccharomyces pombe (strain 972 / ATCC 24843) (Fission yeast).